A 498-amino-acid chain; its full sequence is ATP synthase subunit beta, chloroplastic (498 aa).

G172–T179 contacts ATP.

It belongs to the ATPase alpha/beta chains family. F-type ATPases have 2 components, CF(1) - the catalytic core - and CF(0) - the membrane proton channel. CF(1) has five subunits: alpha(3), beta(3), gamma(1), delta(1), epsilon(1). CF(0) has four main subunits: a(1), b(1), b'(1) and c(9-12).

It localises to the plastid. The protein resides in the chloroplast thylakoid membrane. The enzyme catalyses ATP + H2O + 4 H(+)(in) = ADP + phosphate + 5 H(+)(out). Produces ATP from ADP in the presence of a proton gradient across the membrane. The catalytic sites are hosted primarily by the beta subunits. This chain is ATP synthase subunit beta, chloroplastic, found in Platanus occidentalis (Sycamore).